The following is a 576-amino-acid chain: MSVDTSSTLSTVTDANLHSRFHSRLVPFTHHFSLSQPKRISSIRCQSINTDKKKSSRNLLGNASNLLTDLLSGGSIGSMPIAEGAVSDLLGRPLFFSLYDWFLEHGAVYKLAFGPKAFVVVSDPIVARHILRENAFSYDKGVLADILEPIMGKGLIPADLDTWKQRRRVIAPAFHNSYLEAMVKIFTTCSERTILKFNKLLEGEGYDGPDSIELDLEAEFSSLALDIIGLGVFNYDFGSVTKESPVIKAVYGTLFEAEHRSTFYIPYWKIPLARWIVPRQRKFQDDLKVINTCLDGLIRNAKESRQETDVEKLQQRDYLNLKDASLLRFLVDMRGADVDDRQLRDDLMTMLIAGHETTAAVLTWAVFLLAQNPSKMKKAQAEVDLVLGTGRPTFESLKELQYIRLIVVEALRLYPQPPLLIRRSLKSDVLPGGHKGEKDGYAIPAGTDVFISVYNLHRSPYFWDRPDDFEPERFLVQNKNEEIEGWAGLDPSRSPGALYPNEVISDFAFLPFGGGPRKCVGDQFALMESTVALTMLLQNFDVELKGTPESVELVTGATIHTKNGMWCRLKKRSNLR.

The transit peptide at 1-44 directs the protein to the chloroplast; it reads MSVDTSSTLSTVTDANLHSRFHSRLVPFTHHFSLSQPKRISSIR. C519 is a binding site for heme.

Belongs to the cytochrome P450 family. It depends on heme as a cofactor.

Its subcellular location is the plastid. The protein resides in the chloroplast membrane. The chain is Cytochrome P450 97B2, chloroplastic (CYP97B2) from Glycine max (Soybean).